A 480-amino-acid chain; its full sequence is Major capsid protein (480 aa).

The protein localises to the virion. In terms of biological role, major protein of the capsid. The polypeptide is Major capsid protein (MCP-1) (Trichoplusia ni ascovirus 2c (TnAV-2c)).